The chain runs to 167 residues: Sperm acrosome membrane-associated protein 3 (167 aa).

Over 1 to 63 (MVSALREAPL…EARSRALRRR (63 aa)) the chain is Cytoplasmic. Residues 64–84 (WCPAGIILLALISLLSCLLPA) form a helical; Signal-anchor for type II membrane protein membrane-spanning segment. Residues 85-167 (SEAKVYGRCE…VPNVCQMYCS (83 aa)) are Extracellular-facing. One can recognise a C-type lysozyme domain in the interval 88 to 167 (KVYGRCELAR…VPNVCQMYCS (80 aa)). Residues Cys-151 and Cys-166 are joined by a disulfide bond.

The protein belongs to the glycosyl hydrolase 22 family. Interacts with ASTL. In terms of processing, the processed form derives from the membrane form by proteolytic processing.

Its subcellular location is the cytoplasmic vesicle. The protein resides in the secretory vesicle. The protein localises to the acrosome membrane. Its function is as follows. Sperm surface membrane protein that may be involved in sperm-egg plasma membrane adhesion and fusion during fertilization. It could be a potential receptor for the egg oligosaccharide residue N-acetylglucosamine, which is present in the extracellular matrix over the egg plasma membrane. The processed form has no detectable bacteriolytic activity in vitro. This Pongo pygmaeus (Bornean orangutan) protein is Sperm acrosome membrane-associated protein 3 (SPACA3).